Reading from the N-terminus, the 250-residue chain is Kallikrein-14 (250 aa).

Positions 1–18 (MFLLLIILQALAVAIAQS) are cleaved as a signal peptide. Residues 19 to 23 (QGDHK) constitute a propeptide, activation peptide. One can recognise a Peptidase S1 domain in the interval 24 to 248 (IIGGYRCVRN…YHSWIQRTMQ (225 aa)). Cys-51 and Cys-67 are oxidised to a cystine. Residues His-66 and Asp-110 each act as charge relay system in the active site. 3 disulfides stabilise this stretch: Cys-142/Cys-209, Cys-174/Cys-188, and Cys-199/Cys-224. The active-site Charge relay system is the Ser-203.

Belongs to the peptidase S1 family. Kallikrein subfamily. In terms of processing, proteolytic cleavage of the activation peptide produces the active enzyme.

It is found in the secreted. The protein resides in the extracellular space. Inhibited by SERPINA1, SERPINC1, SERPINE1, SERPINF2, aprotinin, soybean, trypsin inhibitor and leupeptin. Inhibited by serine protease inhibitor SPINK5. Has an autoproteolytic activity which may have a regulatory effect. Activated by citrate and inhibited by zinc and to a lower extent by manganese. In terms of biological role, serine-type endopeptidase with a dual trypsin-like and chymotrypsin-like substrate specificity. May activate/inactivate the proteinase-activated receptors F2R, F2RL1 and F2RL3 and other kallikreins including KLK1, KLK3, KLK5 and KLK11. May function in seminal clot liquefaction through direct cleavage of the semenogelin SEMG1 and SEMG2 and activation of KLK3. May function through desmoglein DSG1 cleavage in epidermal desquamation a process by which the most superficial corneocytes are shed from the skin surface. May be involved in several aspects of tumor progression including growth, invasion and angiogenesis. The protein is Kallikrein-14 (Klk14) of Mus musculus (Mouse).